The chain runs to 133 residues: Basic leucine zipper transcriptional factor ATF-like 3 (133 aa).

A disordered region spans residues 1 to 68 (MSQGPPAGGV…EHESLEQENS (68 aa)). A phosphoserine mark is found at S2 and S24. The span at 11-24 (LQSSVAAPGNQPQS) shows a compositional bias: polar residues. Residues 28–91 (DDRKVRRREK…RHLTEALKEH (64 aa)) enclose the bZIP domain. Residues 30–55 (RKVRRREKNRVAAQRSRKKQTQKSDK) form a basic motif region. A compositionally biased stretch (basic and acidic residues) spans 51–68 (QKSDKLHEEHESLEQENS). Residues 56–84 (LHEEHESLEQENSVLRREIAKLKEELRHL) are leucine-zipper.

The protein belongs to the bZIP family. In terms of assembly, heterodimer; heterodimerizes with JUN family proteins. Interacts with JUN. As to expression, ubiquitously expressed.

Its subcellular location is the nucleus. Functionally, AP-1 family transcription factor that controls the differentiation of CD8(+) thymic conventional dendritic cells in the immune system. Acts via the formation of a heterodimer with JUN family proteins that recognizes and binds DNA sequence 5'-TGA[CG]TCA-3' and regulates expression of target genes. Required for development of CD8-alpha(+) classical dendritic cells (cDCs) and related CD103(+) dendritic cells that cross-present antigens to CD8 T-cells and produce interleukin-12 (IL12) in response to pathogens. The polypeptide is Basic leucine zipper transcriptional factor ATF-like 3 (Batf3) (Rattus norvegicus (Rat)).